A 598-amino-acid chain; its full sequence is Urease subunit alpha (598 aa).

Ni(2+) is bound by residues histidine 141, histidine 143, and lysine 223. Lysine 223 carries the N6-carboxylysine modification. Histidine 225 lines the substrate pocket. Ni(2+)-binding residues include histidine 252 and histidine 278. Histidine 326 serves as the catalytic Proton donor. Aspartate 366 contributes to the Ni(2+) binding site.

It belongs to the metallo-dependent hydrolases superfamily. Urease alpha subunit family. As to quaternary structure, heterotrimer of UreA (gamma), UreB (beta) and UreC (alpha) subunits. Three heterotrimers associate to form the active enzyme. Ni cation is required as a cofactor. Carboxylation allows a single lysine to coordinate two nickel ions.

The protein localises to the cytoplasm. It carries out the reaction urea + 2 H2O + H(+) = hydrogencarbonate + 2 NH4(+). Its pathway is nitrogen metabolism; urea degradation; CO(2) and NH(3) from urea (urease route): step 1/1. In Ureaplasma parvum serovar 3 (strain ATCC 27815 / 27 / NCTC 11736), this protein is Urease subunit alpha.